The following is a 58-amino-acid chain: Proteinase inhibitor PSKP-2 (58 aa).

The Kazal-like domain maps to 1 to 58 (VIEPDCKKYEGKKCPPDIALVCGTNGREYYNECALCVFIRDSTLKADKAIKIKKWGKC). Disulfide bonds link Cys6–Cys36, Cys14–Cys33, and Cys22–Cys58.

Skin.

It localises to the secreted. Functionally, may have a role in mucosal defense against microbes by interacting directly with their membranes. This is Proteinase inhibitor PSKP-2 from Phyllomedusa sauvagei (Sauvage's leaf frog).